Consider the following 261-residue polypeptide: Calbindin (261 aa).

N-acetylalanine is present on Ala2. The interval 2 to 7 is interaction with RANBP9; that stretch reads AESHLQ. EF-hand domains lie at 11 to 46, 53 to 88, 98 to 133, 142 to 177, and 186 to 221; these read ITAS…LQQA, ELSP…EENF, KSCE…LLEK, KLAE…QENF, and MCGK…LCEK. Ca(2+) is bound by residues Asp24, Asp26, Ser28, Tyr30, and Glu35. The Ca(2+) site is built by Asp111, Asp113, Glu122, Asp155, Asn157, Asp159, Lys161, Glu166, Asp199, Asp201, Asn203, Tyr205, and Glu210.

The protein belongs to the calbindin family. As to quaternary structure, interacts with RANBP9.

Buffers cytosolic calcium. May stimulate a membrane Ca(2+)-ATPase and a 3',5'-cyclic nucleotide phosphodiesterase. The sequence is that of Calbindin (CALB1) from Pongo abelii (Sumatran orangutan).